The following is a 279-amino-acid chain: D-aminoacyl-tRNA deacylase (279 aa).

The tract at residues 81–100 (GRKSLTVHHPGNPTEDNSLG) is disordered.

This sequence belongs to the DtdA deacylase family. As to quaternary structure, monomer. Zn(2+) is required as a cofactor.

It carries out the reaction a D-aminoacyl-tRNA + H2O = a tRNA + a D-alpha-amino acid + H(+). The enzyme catalyses glycyl-tRNA(Ala) + H2O = tRNA(Ala) + glycine + H(+). D-aminoacyl-tRNA deacylase with broad substrate specificity. By recycling D-aminoacyl-tRNA to D-amino acids and free tRNA molecules, this enzyme counteracts the toxicity associated with the formation of D-aminoacyl-tRNA entities in vivo. The polypeptide is D-aminoacyl-tRNA deacylase (Aeropyrum pernix (strain ATCC 700893 / DSM 11879 / JCM 9820 / NBRC 100138 / K1)).